The following is a 135-amino-acid chain: Fatty acid-binding protein 5 (135 aa).

N-acetylalanine is present on A2. K17 carries the N6-acetyllysine modification. The Nuclear localization signal signature appears at 24–34 (KELGVGIALRK). Residues C43 and R109 each contribute to the N-eicosanoyl ethanolamine site. Residues C120 and C127 are joined by a disulfide bond. Residue 129-131 (RIY) participates in (9Z,12Z)-octadecadienoate binding. Y131 serves as a coordination point for N-eicosanoyl ethanolamine. Y131 contributes to the hexadecanoate binding site. At Y131 the chain carries Phosphotyrosine.

It belongs to the calycin superfamily. Fatty-acid binding protein (FABP) family. Monomer. Homodimer. As to expression, keratinocytes; highly expressed in psoriatic skin. Expressed in brain gray matter.

Its subcellular location is the cytoplasm. The protein localises to the nucleus. The protein resides in the synapse. It is found in the postsynaptic density. It localises to the secreted. The enzyme catalyses hexadecanoate(out) = hexadecanoate(in). The catalysed reaction is (9Z,12Z)-octadecadienoate(out) = (9Z,12Z)-octadecadienoate(in). It catalyses the reaction (9Z)-octadecenoate(out) = (9Z)-octadecenoate(in). Intracellular carrier for long-chain fatty acids and related active lipids, such as endocannabinoids, that regulate the metabolism and actions of the ligands they bind. In addition to the cytosolic transport, selectively delivers specific fatty acids from the cytosol to the nucleus, wherein they activate nuclear receptors. Delivers retinoic acid to the nuclear receptor peroxisome proliferator-activated receptor delta; which promotes proliferation and survival. May also serve as a synaptic carrier of endocannabinoid at central synapses and thus controls retrograde endocannabinoid signaling. Modulates inflammation by regulating PTGES induction via NF-kappa-B activation, and prostaglandin E2 (PGE2) biosynthesis during inflammation. May be involved in keratinocyte differentiation. The chain is Fatty acid-binding protein 5 from Homo sapiens (Human).